A 266-amino-acid polypeptide reads, in one-letter code: Transcription regulator FGM4 (266 aa).

A disordered region spans residues 17–36 (KTQNRLAKRKSRIHAGKQQG). A compositionally biased stretch (basic residues) spans 18 to 31 (TQNRLAKRKSRIHA). ANK repeat units lie at residues 183–212 (KPGS…NVNE) and 216–245 (AGYS…DWSY).

Its subcellular location is the nucleus. Transcription regulator; part of the Fg3_54/C64 gene cluster that mediates the biosynthesis of the octapeptide fusaoctaxin A, a virulence factor that is required for cell-to-cell invasiveness of plant host. Positively regulates the expression the Fg3_54/C64 gene cluster. The chain is Transcription regulator FGM4 from Gibberella zeae (strain ATCC MYA-4620 / CBS 123657 / FGSC 9075 / NRRL 31084 / PH-1) (Wheat head blight fungus).